Reading from the N-terminus, the 209-residue chain is Uracil phosphoribosyltransferase (209 aa).

Residues Arg-79, Arg-104, and 131 to 139 (DPMLATGGS) contribute to the 5-phospho-alpha-D-ribose 1-diphosphate site. Residues Ile-194 and 199–201 (GDA) each bind uracil. 5-phospho-alpha-D-ribose 1-diphosphate is bound at residue Asp-200.

This sequence belongs to the UPRTase family. Mg(2+) is required as a cofactor.

It carries out the reaction UMP + diphosphate = 5-phospho-alpha-D-ribose 1-diphosphate + uracil. Its pathway is pyrimidine metabolism; UMP biosynthesis via salvage pathway; UMP from uracil: step 1/1. Allosterically activated by GTP. Catalyzes the conversion of uracil and 5-phospho-alpha-D-ribose 1-diphosphate (PRPP) to UMP and diphosphate. This is Uracil phosphoribosyltransferase from Desulfitobacterium hafniense (strain DSM 10664 / DCB-2).